Consider the following 213-residue polypeptide: Large ribosomal subunit protein uL1 (213 aa).

Belongs to the universal ribosomal protein uL1 family. Part of the 50S ribosomal subunit.

In terms of biological role, binds directly to 23S rRNA. Probably involved in E site tRNA release. Protein L1 is also a translational repressor protein, it controls the translation of its operon by binding to its mRNA. The chain is Large ribosomal subunit protein uL1 from Methanococcus voltae.